Reading from the N-terminus, the 390-residue chain is Digeranylgeranylglycerophospholipid reductase (390 aa).

Residues A18, E37, C48, A49, A51, R98, V122, D278, G290, and I291 each coordinate FAD. Position 368 (V368) interacts with a 2,3-bis-O-(geranylgeranyl)-sn-glycerol 1-phospholipid.

Belongs to the geranylgeranyl reductase family. DGGGPL reductase subfamily. FAD is required as a cofactor.

The catalysed reaction is a 2,3-bis-O-phytanyl-sn-glycerol 1-phospholipid + 8 A = a 2,3-bis-O-(geranylgeranyl)-sn-glycerol 1-phospholipid + 8 AH2. It catalyses the reaction 2,3-bis-O-(phytanyl)-sn-glycerol 1-phosphate + 8 A = 2,3-bis-O-(geranylgeranyl)-sn-glycerol 1-phosphate + 8 AH2. It carries out the reaction CDP-2,3-bis-O-(geranylgeranyl)-sn-glycerol + 8 AH2 = CDP-2,3-bis-O-(phytanyl)-sn-glycerol + 8 A. The enzyme catalyses archaetidylserine + 8 AH2 = 2,3-bis-O-phytanyl-sn-glycero-3-phospho-L-serine + 8 A. It participates in membrane lipid metabolism; glycerophospholipid metabolism. In terms of biological role, is involved in the reduction of 2,3-digeranylgeranylglycerophospholipids (unsaturated archaeols) into 2,3-diphytanylglycerophospholipids (saturated archaeols) in the biosynthesis of archaeal membrane lipids. Catalyzes the formation of archaetidic acid (2,3-di-O-phytanyl-sn-glyceryl phosphate) from 2,3-di-O-geranylgeranylglyceryl phosphate (DGGGP) via the hydrogenation of each double bond of the isoprenoid chains. Is also probably able to reduce double bonds of geranyl groups in CDP-2,3-bis-O-(geranylgeranyl)-sn-glycerol and archaetidylserine, thus acting at various stages in the biosynthesis of archaeal membrane lipids. This Methanococcus maripaludis (strain C7 / ATCC BAA-1331) protein is Digeranylgeranylglycerophospholipid reductase.